Here is a 427-residue protein sequence, read N- to C-terminus: Putative acyl-CoA thioester hydrolase YbhC (427 aa).

The first 21 residues, 1–21, serve as a signal peptide directing secretion; it reads MNTFSVSRLALALAFGVTLTA. Residue cysteine 22 is the site of N-palmitoyl cysteine attachment. A lipid anchor (S-diacylglycerol cysteine) is attached at cysteine 22. The disordered stretch occupies residues 23 to 42; sequence SSTPPDQRPSDQTAPGTSSR. Cysteine 185 and cysteine 197 are oxidised to a cystine. Aspartate 285 (nucleophile) is an active-site residue. Arginine 345 serves as a coordination point for substrate.

It belongs to the pectinesterase family.

It localises to the cell outer membrane. Its function is as follows. Putative thioesterase. Does not bind pectin, and has no pectinesterase activity. The protein is Putative acyl-CoA thioester hydrolase YbhC (ybhC) of Escherichia coli (strain K12).